Reading from the N-terminus, the 295-residue chain is Inositol polyphosphate multikinase IPK2 (295 aa).

The interval 1–21 (MASDLRPPEHQVAGHRASADK) is disordered.

It belongs to the inositol phosphokinase (IPK) family.

The enzyme catalyses 1D-myo-inositol 1,4,5-trisphosphate + 2 ATP = 1D-myo-inositol 1,3,4,5,6-pentakisphosphate + 2 ADP + 2 H(+). The catalysed reaction is 1D-myo-inositol 1,3,4,6-tetrakisphosphate + ATP = 1D-myo-inositol 1,3,4,5,6-pentakisphosphate + ADP + H(+). In terms of biological role, inositol phosphate kinase with a broad substrate specificity. Phosphorylates inositol 1,4,5-trisphosphate (Ins(1,4,5)P3), inositol 1,4,5,6-tetrakisphosphate (Ins(1,4,5,6)P4), inositol 1,3,4,5-tetrakisphosphate (Ins(1,3,4,5)P4), inositol 1,3,4,6-tetrakisphosphate (Ins(1,3,4,6)P4) and inositol 1,2,3,4,6-pentakisphosphate (Ins(1,2,3,4,6)P5) but not inositol 1,4-bisphosphate (Ins(1,4)P2), inositol 1,3,4-trisphosphate (Ins(1,3,4)P3), inositol 1,2,6-trisphosphate (Ins(1,2,6)P3), inositol 3,4,5,6-tetrakisphosphate (Ins(3,4,5,6)P4), inositol 1,3,4,5,6-pentakisphosphate (Ins(1,3,4,5,6)P5), inositol 1,2,4,5,6-pentakisphosphate (Ins(1,2,4,5,6)P5) or inositol hexakisphosphate (InsP6). Regulates pollen and root development probably through the regulation of InsP3-mediated calcium accumulation. In Oryza sativa subsp. indica (Rice), this protein is Inositol polyphosphate multikinase IPK2.